Reading from the N-terminus, the 292-residue chain is MALLSPPSPPPPLPPLRRRPASPTLLAVATRPSSLLSLPHCHCGLPLPSTANARAYSRSSRRRRRVAASLGQDEPGVSDTAVAPEGEGDSEPPASSDGAAGDIAASAEQPEASPEDLEDIRQVKRVLELLQKNRDMTFGEVKLTIMIEDPRDIERKRLLGIEDPDEITRDDLADALVEVNEGRIPENRVALQLLAKEMTEWPDLEMEAPKKKSKPGKSVYAKATDTGIDPETAAKRLNIDWDSAADLDDEEEEDDETEVPSAVGYSALYLLTAFPVIIGISVVLILFYNSLQ.

Pro residues predominate over residues 1-15; it reads MALLSPPSPPPPLPP. A chloroplast-targeting transit peptide spans 1 to 67; that stretch reads MALLSPPSPP…RSSRRRRRVA (67 aa). 2 disordered regions span residues 1–119 and 206–225; these read MALL…DLED and MEAP…KATD. Composition is skewed to low complexity over residues 49–58 and 94–112; these read STANARAYSR and ASSD…QPEA. A helical membrane pass occupies residues 267–287; that stretch reads ALYLLTAFPVIIGISVVLILF.

Belongs to the Y3IP1/CEST family.

The protein localises to the plastid. It is found in the chloroplast thylakoid membrane. Involved in light-induced chloroplast development and growth. Involved in the plant response to abiotic and photooxidative stresses. May be involved in the suppression of photooxidative damage. This chain is Protein CHLOROPLAST ENHANCING STRESS TOLERANCE, chloroplastic (CEST), found in Oryza sativa subsp. japonica (Rice).